A 344-amino-acid polypeptide reads, in one-letter code: Heat-inducible transcription repressor HrcA (344 aa).

This sequence belongs to the HrcA family.

Functionally, negative regulator of class I heat shock genes (grpE-dnaK-dnaJ and groELS operons). Prevents heat-shock induction of these operons. In Geobacillus sp. (strain WCH70), this protein is Heat-inducible transcription repressor HrcA.